We begin with the raw amino-acid sequence, 292 residues long: Phosphoribulokinase 2 (292 aa).

12–20 (GSSGAGTST) lines the ATP pocket.

The protein belongs to the phosphoribulokinase family.

It catalyses the reaction D-ribulose 5-phosphate + ATP = D-ribulose 1,5-bisphosphate + ADP + H(+). Its pathway is carbohydrate biosynthesis; Calvin cycle. The chain is Phosphoribulokinase 2 (prkB) from Cereibacter sphaeroides (Rhodobacter sphaeroides).